The chain runs to 369 residues: Protein RIC-3 (369 aa).

Positions 1–28 (MAYSTVQRVALASGLVLALSLLLPKAFL) are cleaved as a signal peptide. At 29-95 (SRGKRQEPPP…AGGGGSGRGL (67 aa)) the chain is on the lumenal side. Residues 30–67 (RGKRQEPPPTPEGKLGRFPPMMHHHQAPSDGQTPGARF) form a disordered region. The helical transmembrane segment at 96–116 (MGQIIPIYGFGIFLYILYILF) threads the bilayer. Residues 117–369 (KLSKGKTTAE…LRKRNPQGLE (253 aa)) are Cytoplasmic-facing. The stretch at 140 to 169 (RKITSFELAQLQEKLKETEAAMEKLINRVG) forms a coiled coil. Lys-202 carries the post-translational modification N6-acetyllysine; alternate. Lys-202 participates in a covalent cross-link: Glycyl lysine isopeptide (Lys-Gly) (interchain with G-Cter in ubiquitin); alternate. Disordered stretches follow at residues 272–295 (ESDH…SVTS) and 316–369 (LAEN…QGLE). The segment covering 332–346 (ETTKEEWSQDFKDEG) has biased composition (basic and acidic residues). The span at 360-369 (LRKRNPQGLE) shows a compositional bias: basic residues.

This sequence belongs to the ric-3 family. As to quaternary structure, monomer and homodimer. Interacts with CHRNA7, CHRNA3, CHRNA4, CHRNB2, CHRNB4 and HTR3A. Broadly expressed, with high levels in muscle, brain, heart, pancreas and testis. In the central nervous system, highest levels are detected in the cerebellum and pituitary gland. Over-expressed in brains from patients with bipolar disease or schizophrenia. Isoform 5 is predominantly expressed in the brain.

It localises to the endoplasmic reticulum membrane. The protein resides in the golgi apparatus membrane. Its function is as follows. Molecular chaperone which facilitates proper subunit assembly and surface trafficking of alpha-7 (CHRNA7) and alpha-8 (CHRNA8) nicotinic acetylcholine receptors. May also promote functional expression of homomeric serotoninergic 5-HT3 receptors, and of heteromeric acetylcholine receptors alpha-3/beta-2, alpha-3/beta-4, alpha-4/beta-2 and alpha-4/beta-4. This Homo sapiens (Human) protein is Protein RIC-3 (RIC3).